A 259-amino-acid polypeptide reads, in one-letter code: MLLAIDCGNTNTLFAIHDGNDWVAQWRSGTDSTRTADEHAVWLSQLMGLQGRSFADITACVISTVVPQALFNLRNLSRRYFKAEPVIVGEPGVRMDIEVRLDRPQDAGADRLVNALGARAVYDGALIIIDSGTATTFDVIAADGAFEGGIIAPGINLSMQALHGAAAKLPRVAIAKPARVMGKDTVSAMQSGVFWGYIDLIDGLVQRLKSEYAQPMTVVATGGVVSLFDGASKAIDHYDADLTIRGLLEVWKLNGGADT.

6–13 provides a ligand contact to ATP; that stretch reads DCGNTNTL. 108–111 contributes to the substrate binding site; the sequence is GADR. The active-site Proton acceptor is aspartate 110. Aspartate 130 serves as a coordination point for K(+). Threonine 133 is a binding site for ATP. Residue threonine 185 participates in substrate binding.

The protein belongs to the type III pantothenate kinase family. In terms of assembly, homodimer. NH4(+) is required as a cofactor. It depends on K(+) as a cofactor.

It is found in the cytoplasm. The catalysed reaction is (R)-pantothenate + ATP = (R)-4'-phosphopantothenate + ADP + H(+). Its pathway is cofactor biosynthesis; coenzyme A biosynthesis; CoA from (R)-pantothenate: step 1/5. Its function is as follows. Catalyzes the phosphorylation of pantothenate (Pan), the first step in CoA biosynthesis. The sequence is that of Type III pantothenate kinase from Maricaulis maris (strain MCS10) (Caulobacter maris).